The sequence spans 411 residues: POU domain, class 4, transcription factor 2 (411 aa).

Residues leucine 29 to proline 95 form a disordered region. The segment covering serine 31–asparagine 52 has biased composition (low complexity). 2 stretches are compositionally biased toward gly residues: residues alanine 53–arginine 68 and glycine 76–serine 86. The tract at residues cysteine 93–histidine 239 is required for transcriptional activation. Positions arginine 112 to isoleucine 121 match the POU-IV box motif. Over residues serine 154–alanine 168 the composition is skewed to low complexity. The interval serine 154–leucine 190 is disordered. Basic residues predominate over residues threonine 172–proline 186. The short motif at histidine 173–histidine 187 is the Nuclear speckle targeting signal element. The segment at alanine 240–isoleucine 411 is required for DNA-binding and transcriptional repression. Residues aspartate 252–glutamate 329 enclose the POU-specific domain. A DNA-binding region (homeobox) is located at residues lysine 347 to lysine 406.

It belongs to the POU transcription factor family. Class-4 subfamily. As to quaternary structure, isoform 2: Interacts with POU4F1 isoform 1; this interaction inhibits both POU4F1 DNA-binding and transcriptional activities. Isoform 2: Interacts (C-terminus) with ESR1 (via DNA-binding domain); this interaction increases the estrogen receptor ESR1 transcriptional activity in a DNA- and ligand 17-beta-estradiol-independent manner. Isoform 2: Interacts (via C-terminus) with TP53 (via N-terminus). Interacts with DLX1 (via homeobox DNA-binding domain); this interaction suppresses DLX1-mediated transcriptional activity in postnatal retina enhancing retinal ganglion cell (RGC) differentiation. Interacts with DLX2 (via homeobox DNA-binding domain); this interaction enhances RGC differentiation. Isoform 1: Interacts (via C-terminus) with ISL1 (via C-terminus). Isoform 1: Interacts with ISL2. Isoform 1: Interacts with LHX2. Expressed in retinal ganglion cells (RGCs). Expressed in mature osteoclasts. Expressed in cells of layers of the superior colliculus and the adjacent periaqueductal gray (at protein level). Expressed in the brain, peripheral sensory nervous system and retina. Expressed in the optical, intermediate, and deep gray areas of the superior colliculus, the dorsal column of the mesencephalic and pontine central gray, and the lateral interpeduncular nucleus of the brain. Expressed predominantly in postmitotic, terminally differentiated neurons. Expressed in ganglion cell layer (GCL) of the retina.

The protein localises to the nucleus. It localises to the nucleus speckle. It is found in the cytoplasm. Its function is as follows. Tissue-specific DNA-binding transcription factor involved in the development and differentiation of target cells. Functions either as activator or repressor by modulating the rate of target gene transcription through RNA polymerase II enzyme in a promoter-dependent manner. Binds to the consensus octamer motif 5'-AT[A/T]A[T/A]T[A/T]A-3' of promoter of target genes. Plays a fundamental role in the gene regulatory network essential for retinal ganglion cell (RGC) differentiation. Binds to an octamer site to form a ternary complex with ISL1; cooperates positively with ISL1 and ISL2 to potentiate transcriptional activation of RGC target genes being involved in RGC fate commitment in the developing retina and RGC axon formation and pathfinding. Inhibits DLX1 and DLX2 transcriptional activities preventing DLX1- and DLX2-mediated ability to promote amacrine cell fate specification. In cooperation with TP53 potentiates transcriptional activation of BAX promoter activity increasing neuronal cell apoptosis. Negatively regulates BAX promoter activity in the absence of TP53. Acts as a transcriptional coactivator via its interaction with the transcription factor ESR1 by enhancing its effect on estrogen response element (ERE)-containing promoter. Antagonizes the transcriptional stimulatory activity of POU4F1 by preventing its binding to an octamer motif. Involved in TNFSF11-mediated terminal osteoclast differentiation. This chain is POU domain, class 4, transcription factor 2, found in Mus musculus (Mouse).